The following is a 181-amino-acid chain: RNA-binding protein (181 aa).

Residues 106–181 (FLTSVNPGES…DANTRKSKRK (76 aa)) form a disordered region. Residues 141 to 157 (RNSKKGAKKSSSARKKK) are compositionally biased toward basic residues. Over residues 160–172 (SSNSETDLSSDSD) the composition is skewed to low complexity.

Belongs to the phytoreovirus RNA-binding protein family.

The protein resides in the host cytoplasm. In terms of biological role, constituent of viral factories. Binds to ssRNA and dsRNA. The chain is RNA-binding protein from Rice dwarf virus (isolate Akita) (RDV).